We begin with the raw amino-acid sequence, 859 residues long: Chitin synthase 1 (859 aa).

Residues 1-22 are disordered; it reads MRRWFKKTLPRPPDEEESAGLT. The next 5 membrane-spanning stretches (helical) occupy residues 544 to 564, 615 to 635, 662 to 682, 793 to 813, and 833 to 853; these read LATIVFGWFNIGNFFIIFYIL, MVIMYSILMGYLLFCSGWIAY, FINIVISLSSTYGMYLVVSII, YVVLTWILSNLFLVGIVLSIP, and LWSVVAFSVFRFIGCIFYLFI.

The protein belongs to the chitin synthase family.

It is found in the cell membrane. It carries out the reaction [(1-&gt;4)-N-acetyl-beta-D-glucosaminyl](n) + UDP-N-acetyl-alpha-D-glucosamine = [(1-&gt;4)-N-acetyl-beta-D-glucosaminyl](n+1) + UDP + H(+). Functionally, polymerizes chitin, a structural polymer of the cell wall and septum, by transferring the sugar moiety of UDP-GlcNAc to the non-reducing end of the growing chitin polymer. In Schizosaccharomyces pombe (strain 972 / ATCC 24843) (Fission yeast), this protein is Chitin synthase 1 (chs1).